Here is a 356-residue protein sequence, read N- to C-terminus: tRNA N6-adenosine threonylcarbamoyltransferase (356 aa).

Fe cation is bound by residues histidine 111 and histidine 115. Substrate is bound by residues 143 to 147 (LASGG), aspartate 178, glycine 191, aspartate 195, and asparagine 286. Aspartate 314 lines the Fe cation pocket.

Belongs to the KAE1 / TsaD family. Fe(2+) serves as cofactor.

Its subcellular location is the cytoplasm. The catalysed reaction is L-threonylcarbamoyladenylate + adenosine(37) in tRNA = N(6)-L-threonylcarbamoyladenosine(37) in tRNA + AMP + H(+). In terms of biological role, required for the formation of a threonylcarbamoyl group on adenosine at position 37 (t(6)A37) in tRNAs that read codons beginning with adenine. Is involved in the transfer of the threonylcarbamoyl moiety of threonylcarbamoyl-AMP (TC-AMP) to the N6 group of A37, together with TsaE and TsaB. TsaD likely plays a direct catalytic role in this reaction. This Sorangium cellulosum (strain So ce56) (Polyangium cellulosum (strain So ce56)) protein is tRNA N6-adenosine threonylcarbamoyltransferase.